We begin with the raw amino-acid sequence, 747 residues long: MFNEITKSVTWNGKVLELSTGKIARQADGAVTVKMGNSVLLCTAVVAKKAKEGIGFFPLTINYREMAYATGKIPGGFFKREGKASDREVLVSRLIDRPIRPLFHPAFVNETHVTCSVLSYDPETPVDILAIIGASAALSLSPAPYLEIVAASKVGLINGEFVLNPTLELLKTSQLDLVVAGTSDSVMMVESEAHLLAEEQMLEAVKFGFESFQPVIKIIKELAEEAKKPKLEMQDLYPASLKKEIEKLFVKEIEQAFAIKSKQERSTNLDLIPEKVLTHFVSDIENKKYSNYQIESALKSIESDILRNEILEKNRRIDGRSTTDIRQIACEIGLLPSAHGSALFTRGETQSLVSTTFGTSLDEQIVDSLEGEYKERFMLNYIFPPYSVNEAMPMKAPSRREVGHGKLAWRAINPILPNKVQFPYSIRVVAETTESNGSSSMATVCGSSLALMYAGVPIKAPVAGIAMGLVKEGKKFAVLSDILGDEDYFGDMDFKVAGTSEGITALQMDIKISGVDFKIMTVALEQARLGRLHILEQMNKVISKPNSELSKNAPSTTTIKIDKDKIRDIIGPGGKVIKEICETSGAKIDISDDGSVSVYASDRDKLKVALDKIKAIAVEPEIGEIFNGTVMKVLDSGAFINYLGNKDGFVHISEISEERIETVSSVLKQGDIVKVKLIGFDNKGKAKLTIKNADKDKSSNNPKPKNNVNNAKENSEPERRDSSKKRAWNEDSNNDKEEAITERKYFN.

Mg(2+)-binding residues include D487 and D493. One can recognise a KH domain in the interval P554–I613. The S1 motif domain maps to G623 to K691. Positions K691–N747 are disordered. The span at S699 to K712 shows a compositional bias: low complexity. The span at A727–N747 shows a compositional bias: basic and acidic residues.

Belongs to the polyribonucleotide nucleotidyltransferase family. Requires Mg(2+) as cofactor.

The protein resides in the cytoplasm. The catalysed reaction is RNA(n+1) + phosphate = RNA(n) + a ribonucleoside 5'-diphosphate. In terms of biological role, involved in mRNA degradation. Catalyzes the phosphorolysis of single-stranded polyribonucleotides processively in the 3'- to 5'-direction. The sequence is that of Polyribonucleotide nucleotidyltransferase from Rickettsia felis (strain ATCC VR-1525 / URRWXCal2) (Rickettsia azadi).